The chain runs to 565 residues: Cytokinin dehydrogenase 2 (565 aa).

Residues Met-1–Ala-20 form the signal peptide. N-linked (GlcNAc...) asparagine glycosylation is present at Asn-64. Residues Arg-74 to Ala-255 form the FAD-binding PCMH-type domain. 3 residues coordinate FAD: Ala-108, Gly-110, and Gly-112. His-113 carries the post-translational modification Pros-8alpha-FAD histidine. Positions 114, 118, 179, 184, 190, 194, and 245 each coordinate FAD. N-linked (GlcNAc...) asparagine glycosylation occurs at Asn-464. FAD contacts are provided by Tyr-517, Ser-554, and Gln-557.

The protein belongs to the oxygen-dependent FAD-linked oxidoreductase family. Monomer. It depends on FAD as a cofactor. Post-translationally, glycosylated. As to expression, mostly expressed in leaves, culms, inflorescence meristems, and flowers, especially in vascular tissues.

Its subcellular location is the secreted. It is found in the extracellular space. The catalysed reaction is N(6)-dimethylallyladenine + A + H2O = 3-methyl-2-butenal + adenine + AH2. Functionally, catalyzes the oxidation of cytokinins, a family of N(6)-substituted adenine derivatives that are plant hormones, where the substituent is an isopentenyl group. Is a major QTL involved in grain yield. Modulates the number of reproductive organs by regulating the cytokinin accumulation in inflorescence meristems. Acts as negative regulator of panicle branching. The sequence is that of Cytokinin dehydrogenase 2 from Oryza sativa subsp. japonica (Rice).